We begin with the raw amino-acid sequence, 658 residues long: UvrABC system protein B (658 aa).

The 390-residue stretch at Lys25–Ile414 folds into the Helicase ATP-binding domain. Gly38–Thr45 lines the ATP pocket. The Beta-hairpin signature appears at His91–Ile114. The Helicase C-terminal domain occupies Gln433–Arg607. In terms of domain architecture, UVR spans Glu623 to Leu658.

This sequence belongs to the UvrB family. Forms a heterotetramer with UvrA during the search for lesions. Interacts with UvrC in an incision complex.

It localises to the cytoplasm. Functionally, the UvrABC repair system catalyzes the recognition and processing of DNA lesions. A damage recognition complex composed of 2 UvrA and 2 UvrB subunits scans DNA for abnormalities. Upon binding of the UvrA(2)B(2) complex to a putative damaged site, the DNA wraps around one UvrB monomer. DNA wrap is dependent on ATP binding by UvrB and probably causes local melting of the DNA helix, facilitating insertion of UvrB beta-hairpin between the DNA strands. Then UvrB probes one DNA strand for the presence of a lesion. If a lesion is found the UvrA subunits dissociate and the UvrB-DNA preincision complex is formed. This complex is subsequently bound by UvrC and the second UvrB is released. If no lesion is found, the DNA wraps around the other UvrB subunit that will check the other stand for damage. The sequence is that of UvrABC system protein B from Helicobacter pylori (strain ATCC 700392 / 26695) (Campylobacter pylori).